The chain runs to 70 residues: Sec-independent protein translocase protein TatA (70 aa).

Residues 1 to 21 traverse the membrane as a helical segment; that stretch reads MGSFSVWHWLIVLVIVLVLFG. The segment at 42-70 is disordered; that stretch reads GMADEDQTPPPADANANAKTVDHKADEIK. A compositionally biased stretch (basic and acidic residues) spans 61-70; the sequence is TVDHKADEIK.

The protein belongs to the TatA/E family. The Tat system comprises two distinct complexes: a TatABC complex, containing multiple copies of TatA, TatB and TatC subunits, and a separate TatA complex, containing only TatA subunits. Substrates initially bind to the TatABC complex, which probably triggers association of the separate TatA complex to form the active translocon.

It is found in the cell inner membrane. Part of the twin-arginine translocation (Tat) system that transports large folded proteins containing a characteristic twin-arginine motif in their signal peptide across membranes. TatA could form the protein-conducting channel of the Tat system. The protein is Sec-independent protein translocase protein TatA of Agrobacterium fabrum (strain C58 / ATCC 33970) (Agrobacterium tumefaciens (strain C58)).